We begin with the raw amino-acid sequence, 416 residues long: GTPase ERA1, chloroplastic (416 aa).

Residues 1 to 53 constitute a chloroplast transit peptide; the sequence is MELGLALRLVAPPPLLPCLSRRALSLPPDFVSSRVLRGRRIHASRLKHGAGVV. The Era-type G domain maps to 117–287; that stretch reads RSGYVAVLGK…KEWILSKLPL (171 aa). A G1 region spans residues 125–132; that stretch reads GKPNVGKS. Position 125 to 132 (125 to 132) interacts with GTP; the sequence is GKPNVGKS. The G2 stretch occupies residues 151 to 155; sequence QTTRH. Residues 172–175 are G3; it reads DTPG. Residues 172-176 and 237-240 contribute to the GTP site; these read DTPGV and NKKD. Residues 237–240 form a G4 region; it reads NKKD. A G5 region spans residues 266–268; it reads ISA. The KH type-2 domain occupies 318 to 395; that stretch reads YRQEIPYSCQ…YLEVEVKVKE (78 aa).

The protein belongs to the TRAFAC class TrmE-Era-EngA-EngB-Septin-like GTPase superfamily. Era GTPase family.

Its subcellular location is the plastid. It localises to the chloroplast stroma. The protein resides in the chloroplast nucleoid. In terms of biological role, nuclear genome-encoded probable GTPase involved in ribosome biogenesis in chloroplasts. Plays a role in 16S rRNA maturation in plastids and may contribute to the assembly of the small (30S) ribosomal subunit. This is GTPase ERA1, chloroplastic from Zea mays (Maize).